The sequence spans 652 residues: DNA ligase (652 aa).

NAD(+) contacts are provided by residues D29 to D33, S78 to L79, and E107. The active-site N6-AMP-lysine intermediate is the K109. NAD(+)-binding residues include R130, E164, K278, and K302. C395, C398, C413, and C418 together coordinate Zn(2+). Residues T577–L652 enclose the BRCT domain.

It belongs to the NAD-dependent DNA ligase family. LigA subfamily. The cofactor is Mg(2+). It depends on Mn(2+) as a cofactor.

It carries out the reaction NAD(+) + (deoxyribonucleotide)n-3'-hydroxyl + 5'-phospho-(deoxyribonucleotide)m = (deoxyribonucleotide)n+m + AMP + beta-nicotinamide D-nucleotide.. Its function is as follows. DNA ligase that catalyzes the formation of phosphodiester linkages between 5'-phosphoryl and 3'-hydroxyl groups in double-stranded DNA using NAD as a coenzyme and as the energy source for the reaction. It is essential for DNA replication and repair of damaged DNA. The polypeptide is DNA ligase (Streptococcus thermophilus (strain ATCC BAA-491 / LMD-9)).